The following is a 445-amino-acid chain: Exodeoxyribonuclease 7 large subunit (445 aa).

It belongs to the XseA family. As to quaternary structure, heterooligomer composed of large and small subunits.

It is found in the cytoplasm. It carries out the reaction Exonucleolytic cleavage in either 5'- to 3'- or 3'- to 5'-direction to yield nucleoside 5'-phosphates.. Bidirectionally degrades single-stranded DNA into large acid-insoluble oligonucleotides, which are then degraded further into small acid-soluble oligonucleotides. The sequence is that of Exodeoxyribonuclease 7 large subunit from Staphylococcus haemolyticus (strain JCSC1435).